Consider the following 545-residue polypeptide: MDFKRLTAFFAIALVIMIGWEKMFPTPKPVPAPQQAAQQQAVTASAEAALAPATPITVTTDTVQAVIDEKSGDLRRLTLLKYKATGDENKPFILFGDGKEYTYVAQSELLDAQGNNILKGIGFSAPKKQYSLEGDKVEVRLSAPETRGLKIDKVYTFTKGSYLVNVRFDIANGSGQTANLSADYRIVRDHSEPEGQGYFTHSYVGPVVYTPEGNFQKVSFSDLDDDAKSGKSEAEYIRKTPTGWLGMIEHHFMSTWILQPKGRQSVCAAGECNIDIKRRNDKLYSTSVSVPLAAIQNGAKAEASINLYAGPQTTSVIANIADNLQLAKDYGKVHWFASPLFWLLNQLHNIIGNWGWAIIVLTIIVKAVLYPLTNASYRSMAKMRAAAPKLQAIKEKYGDDRMAQQQAMMQLYTDEKINPLGGCLPMLLQIPVFIGLYWALFASVELRQAPWLGWITDLSRADPYYILPIIMAATMFAQTYLNPPPTDPMQAKMMKIMPLVFSVMFFFFPAGLVLYWVVNNLLTIAQQWHINRSIEKQRAQGEVVS.

4 consecutive transmembrane segments (helical) span residues 350 to 370 (IIGN…AVLY), 424 to 444 (LPML…FASV), 461 to 481 (ADPY…QTYL), and 498 to 518 (PLVF…YWVV).

The protein belongs to the OXA1/ALB3/YidC family. Type 1 subfamily. As to quaternary structure, interacts with the Sec translocase complex via SecD. Specifically interacts with transmembrane segments of nascent integral membrane proteins during membrane integration.

The protein resides in the cell inner membrane. Its function is as follows. Required for the insertion and/or proper folding and/or complex formation of integral membrane proteins into the membrane. Involved in integration of membrane proteins that insert both dependently and independently of the Sec translocase complex, as well as at least some lipoproteins. Aids folding of multispanning membrane proteins. This chain is Membrane protein insertase YidC, found in Neisseria meningitidis serogroup B (strain ATCC BAA-335 / MC58).